A 206-amino-acid polypeptide reads, in one-letter code: Large ribosomal subunit protein uL4 (206 aa).

The tract at residues 48 to 97 (THAVKNRSLVSGGGKKPWKQKHTGRARQGSTRASQWVGGGKAMGPKPRDY) is disordered. The span at 63–72 (KPWKQKHTGR) shows a compositional bias: basic residues.

The protein belongs to the universal ribosomal protein uL4 family. Part of the 50S ribosomal subunit.

Functionally, one of the primary rRNA binding proteins, this protein initially binds near the 5'-end of the 23S rRNA. It is important during the early stages of 50S assembly. It makes multiple contacts with different domains of the 23S rRNA in the assembled 50S subunit and ribosome. Forms part of the polypeptide exit tunnel. The protein is Large ribosomal subunit protein uL4 of Anaeromyxobacter dehalogenans (strain 2CP-1 / ATCC BAA-258).